A 165-amino-acid chain; its full sequence is Lipoprotein signal peptidase (165 aa).

2 helical membrane passes run W66–T86 and N91–V111. Catalysis depends on residues D121 and D139. Residues W132–A152 traverse the membrane as a helical segment.

The protein belongs to the peptidase A8 family.

It localises to the cell inner membrane. It catalyses the reaction Release of signal peptides from bacterial membrane prolipoproteins. Hydrolyzes -Xaa-Yaa-Zaa-|-(S,diacylglyceryl)Cys-, in which Xaa is hydrophobic (preferably Leu), and Yaa (Ala or Ser) and Zaa (Gly or Ala) have small, neutral side chains.. It functions in the pathway protein modification; lipoprotein biosynthesis (signal peptide cleavage). In terms of biological role, this protein specifically catalyzes the removal of signal peptides from prolipoproteins. In Nitratidesulfovibrio vulgaris (strain DP4) (Desulfovibrio vulgaris), this protein is Lipoprotein signal peptidase.